Here is a 446-residue protein sequence, read N- to C-terminus: tRNA-2-methylthio-N(6)-dimethylallyladenosine synthase (446 aa).

The 118-residue stretch at 3–120 (QKLFIKTYGC…LPEMVNSVAH (118 aa)) folds into the MTTase N-terminal domain. Residues cysteine 12, cysteine 49, cysteine 83, cysteine 157, cysteine 161, and cysteine 164 each contribute to the [4Fe-4S] cluster site. The Radical SAM core domain maps to 143-375 (SSEGASAFVS…QQRILQFAQD (233 aa)). Residues 378–442 (RKMVGSTQRI…PNSLRGERVD (65 aa)) form the TRAM domain.

Belongs to the methylthiotransferase family. MiaB subfamily. Monomer. It depends on [4Fe-4S] cluster as a cofactor.

The protein resides in the cytoplasm. It carries out the reaction N(6)-dimethylallyladenosine(37) in tRNA + (sulfur carrier)-SH + AH2 + 2 S-adenosyl-L-methionine = 2-methylsulfanyl-N(6)-dimethylallyladenosine(37) in tRNA + (sulfur carrier)-H + 5'-deoxyadenosine + L-methionine + A + S-adenosyl-L-homocysteine + 2 H(+). Functionally, catalyzes the methylthiolation of N6-(dimethylallyl)adenosine (i(6)A), leading to the formation of 2-methylthio-N6-(dimethylallyl)adenosine (ms(2)i(6)A) at position 37 in tRNAs that read codons beginning with uridine. This Hahella chejuensis (strain KCTC 2396) protein is tRNA-2-methylthio-N(6)-dimethylallyladenosine synthase.